The sequence spans 923 residues: Ubiquitin carboxyl-terminal hydrolase 10 (923 aa).

A DUSP domain is found at 19–134; the sequence is FTPEEEKRIV…GGPPIERKLI (116 aa). Residues 65–91 form a disordered region; it reads NECSTGESSEAPRPGPIDNHDIIESDS. The region spanning 304–895 is the USP domain; it reads AGLSNLGNTC…AAYVLFYRRV (592 aa). C313 serves as the catalytic Nucleophile. Catalysis depends on H853, which acts as the Proton acceptor.

This sequence belongs to the peptidase C19 family.

It carries out the reaction Thiol-dependent hydrolysis of ester, thioester, amide, peptide and isopeptide bonds formed by the C-terminal Gly of ubiquitin (a 76-residue protein attached to proteins as an intracellular targeting signal).. Functionally, recognizes and hydrolyzes the peptide bond at the C-terminal Gly of ubiquitin. Involved in the processing of poly-ubiquitin precursors as well as that of ubiquitinated proteins. The protein is Ubiquitin carboxyl-terminal hydrolase 10 (UBP10) of Arabidopsis thaliana (Mouse-ear cress).